The chain runs to 197 residues: Protein-S-isoprenylcysteine O-methyltransferase A (197 aa).

Transmembrane regions (helical) follow at residues 16-36 (MLLS…TIHG), 52-72 (ALAM…FPGL), and 81-101 (FGLI…ITAG). Residues 116–119 (HGLV), Tyr-124, and 129–132 (HPSY) each bind S-adenosyl-L-methionine. The helical transmembrane segment at 140 to 160 (VGTQVMLCNPVSAVAFAVVVW) threads the bilayer. A substrate-binding site is contributed by Arg-166. Glu-170 contacts S-adenosyl-L-methionine.

The protein belongs to the class VI-like SAM-binding methyltransferase superfamily. Isoprenylcysteine carboxyl methyltransferase family. Zn(2+) is required as a cofactor. Expressed primarily in flowers, stems, leaves and roots. Almost not expressed in siliques. Detected in root tips and vascular tissues of roots, cotyledons, petiols, hypocotyls, filaments, pollen grains and the distal and proximal portions of the gynoecium.

It is found in the endoplasmic reticulum membrane. The catalysed reaction is [protein]-C-terminal S-[(2E,6E)-farnesyl]-L-cysteine + S-adenosyl-L-methionine = [protein]-C-terminal S-[(2E,6E)-farnesyl]-L-cysteine methyl ester + S-adenosyl-L-homocysteine. Its activity is regulated as follows. Inhibited by farnesylthioacetic acid (FTAA) and N-acetyl-S-trans, trans-farnesyl-l-cysteine (AFC). Functionally, catalyzes the post-translational methylation of isoprenylated C-terminal cysteine residues, resulting in the modulation of the function of prenylated proteins. Involved in negative regulation of abscisic acid signaling. Carboxyl methylation is a reversible and potentially regulated step in the post-translational modification of prenylated proteins. The chain is Protein-S-isoprenylcysteine O-methyltransferase A from Arabidopsis thaliana (Mouse-ear cress).